Here is a 121-residue protein sequence, read N- to C-terminus: Putative inactive aspartokinase 3 HI_1632 (121 aa).

It belongs to the aspartokinase family.

The polypeptide is Putative inactive aspartokinase 3 HI_1632 (Haemophilus influenzae (strain ATCC 51907 / DSM 11121 / KW20 / Rd)).